A 144-amino-acid polypeptide reads, in one-letter code: MSDNTGVPEASVETTSVFRADLLKEMESGSQHDASPAGVEGLPEGSALLVVKRGPNAGSRFLLDQETTAAGRHPDSDIFLDDVTVSRRHAEFRRNGDQYEVVDVGSLNGTYVNREPKNSSVLSNGDEIQIGKFRLVFLNGSKEA.

A Phosphothreonine modification is found at T14. Residues 68 to 117 (TAAGRHPDSDIFLDDVTVSRRHAEFRRNGDQYEVVDVGSLNGTYVNREPK) enclose the FHA domain.

The protein localises to the cytoplasm. Functionally, an essential component of the PknG signaling pathway. When unphosphorylated, it inhibits the activity of 2-oxoglutarate dehydrogenase. When phosphorylated it does not inhibit 2-oxoglutarate dehydrogenase. This is Oxoglutarate dehydrogenase inhibitor (odhI) from Corynebacterium jeikeium (strain K411).